Consider the following 615-residue polypeptide: Zinc finger protein 653 (615 aa).

Disordered regions lie at residues 1–48, 95–117, 176–236, and 401–432; these read MAER…ARRR, RSGRHGKPWEQVPKKPKRKKRRR, PLSD…SSGL, and EEKEEPVAPELATTVPESAEPEAEADGEELDG. Residues 107-118 carry the Nuclear localization signal motif; it reads PKKPKRKKRRRR. Over residues 108–117 the composition is skewed to basic residues; it reads KKPKRKKRRR. Positions 193–205 are enriched in low complexity; it reads AGSSDSSSSGSAS. Over residues 226–236 the composition is skewed to polar residues; it reads TPTSPVGSSGL. Acidic residues predominate over residues 419 to 432; the sequence is AEPEAEADGEELDG. The Nuclear localization signal signature appears at 445–451; that stretch reads EPEKRRR. 5 consecutive C2H2-type zinc fingers follow at residues 467-492, 498-522, 528-550, 556-578, and 586-609; these read FHCPYEGCSQVYVALSSFQNHVNLVH, KVCPHPGCGKKFYLSNHLRRHMIIH, FTCETCGKSFKRKNHLEVHRRTH, LQCEICGYQCRQRASLNWHMKKH, and FTCDRCGKRFEKLDSVKFHTLKSH.

It belongs to the krueppel C2H2-type zinc-finger protein family. As to quaternary structure, interacts with NR5A1. In terms of tissue distribution, highly expressed in testis, cerebellum, temporal lobe, hippocampus and the adrenal gland. Moderately expressed in spleen, uterus, thymus, pancreas, kidney, stomach and rectum.

The protein resides in the nucleus. Functionally, transcriptional repressor. May repress NR5A1, PPARG, NR1H3, NR4A2, ESR1 and NR3C1 transcriptional activity. The sequence is that of Zinc finger protein 653 (ZNF653) from Homo sapiens (Human).